The chain runs to 364 residues: Phospho-N-acetylmuramoyl-pentapeptide-transferase (364 aa).

10 helical membrane-spanning segments follow: residues 18–38 (SLLILLILLLGLLCLGFAQIL), 48–68 (LFPLAVSAICSAILGYVVVPV), 91–111 (GTPTMGGIFFVPVAVIIALIW), 114–134 (LDPAVLAVSIVTLAYMGIGWI), 154–174 (LILQIAIAVGFCIWTFLTQSA), 183–203 (GQIILPLGLFFWIIAGFVLVA), 214–234 (VDGLAGGTGSLAFLGLAALMA), 237–257 (NPGLMIFCACMSGGCLGFIVH), 280–300 (AIGILSGHVWGLFLVSGIFFV), and 343–363 (TQIVGLFYLINAGLAVLAVIS).

This sequence belongs to the glycosyltransferase 4 family. MraY subfamily. Requires Mg(2+) as cofactor.

It is found in the cell inner membrane. It carries out the reaction UDP-N-acetyl-alpha-D-muramoyl-L-alanyl-gamma-D-glutamyl-meso-2,6-diaminopimeloyl-D-alanyl-D-alanine + di-trans,octa-cis-undecaprenyl phosphate = di-trans,octa-cis-undecaprenyl diphospho-N-acetyl-alpha-D-muramoyl-L-alanyl-D-glutamyl-meso-2,6-diaminopimeloyl-D-alanyl-D-alanine + UMP. It functions in the pathway cell wall biogenesis; peptidoglycan biosynthesis. Functionally, catalyzes the initial step of the lipid cycle reactions in the biosynthesis of the cell wall peptidoglycan: transfers peptidoglycan precursor phospho-MurNAc-pentapeptide from UDP-MurNAc-pentapeptide onto the lipid carrier undecaprenyl phosphate, yielding undecaprenyl-pyrophosphoryl-MurNAc-pentapeptide, known as lipid I. The chain is Phospho-N-acetylmuramoyl-pentapeptide-transferase from Rippkaea orientalis (strain PCC 8801 / RF-1) (Cyanothece sp. (strain PCC 8801)).